A 121-amino-acid polypeptide reads, in one-letter code: Amelogenin (121 aa).

2 disordered regions span residues 1–20 (LHHQ…HALQ) and 32–121 (QPMQ…WPAT). The span at 48 to 58 (SVTPTQHHQSN) shows a compositional bias: polar residues. Residues 59–71 (LPQPAQQPFQPQV) are compositionally biased toward low complexity. A compositionally biased stretch (pro residues) spans 85–111 (PAHPMPPMPQPPLPPMFPMQPLPPLLP).

This sequence belongs to the amelogenin family.

It is found in the secreted. The protein resides in the extracellular space. It localises to the extracellular matrix. Its function is as follows. Plays a role in the biomineralization of teeth. Seems to regulate the formation of crystallites during the secretory stage of tooth enamel development. Thought to play a major role in the structural organization and mineralization of developing enamel. This chain is Amelogenin (AMEL), found in Ornithorhynchus anatinus (Duckbill platypus).